Here is a 381-residue protein sequence, read N- to C-terminus: Creatine kinase B-type (381 aa).

Ser4 carries the phosphoserine modification. In terms of domain architecture, Phosphagen kinase N-terminal spans 11–98; it reads KLRFPAEDEF…FDPIIEDRHG (88 aa). Position 35 is a phosphothreonine (Thr35). A Glycyl lysine isopeptide (Lys-Gly) (interchain with G-Cter in ubiquitin) cross-link involves residue Lys45. Val72 provides a ligand contact to creatine. A compositionally biased stretch (basic and acidic residues) spans 96–110; the sequence is RHGGYKPSDEHKTDL. The disordered stretch occupies residues 96–123; sequence RHGGYKPSDEHKTDLNPDNLQGGDDLDP. Residues Lys101 and Lys107 each participate in a glycyl lysine isopeptide (Lys-Gly) (interchain with G-Cter in ubiquitin) cross-link. Tyr125 is subject to Phosphotyrosine. The Phosphagen kinase C-terminal domain maps to 125–367; the sequence is YVLSSRVRTG…KLLIEMEQRL (243 aa). ATP is bound by residues 128–132, Arg130, Arg132, and His191; that span reads SSRVR. An internal MTS-like signal region spans residues 130 to 138; that stretch reads RVRTGRSIR. At Ser199 the chain carries Phosphoserine. Residue Glu232 coordinates creatine. Position 236 (Arg236) interacts with ATP. Tyr269 carries the 3'-nitrotyrosine modification. Position 285 (Ser285) interacts with creatine. ATP contacts are provided by residues Arg292, Arg320, 320–325, and Asp335; that span reads RGTGGV. Phosphothreonine is present on Thr322. Residue Lys381 forms a Glycyl lysine isopeptide (Lys-Gly) (interchain with G-Cter in ubiquitin) linkage.

It belongs to the ATP:guanido phosphotransferase family. In terms of assembly, dimer of identical or non-identical chains, which can be either B (brain type) or M (muscle type). With MM being the major form in skeletal muscle and myocardium, MB existing in myocardium, and BB existing in many tissues, especially brain. Interacts with SLC12A6 (via C-terminus); the interaction may be required for SLC12A6 potassium-chloride cotransport activity. In terms of processing, ubiquitinated by the ECS(ASB9) complex, leading to its degradation by the proteasome.

Its subcellular location is the cytoplasm. It is found in the cytosol. It localises to the mitochondrion. The protein localises to the cell membrane. It carries out the reaction creatine + ATP = N-phosphocreatine + ADP + H(+). In terms of biological role, reversibly catalyzes the transfer of phosphate between ATP and various phosphogens (e.g. creatine phosphate). Creatine kinase isoenzymes play a central role in energy transduction in tissues with large, fluctuating energy demands, such as skeletal muscle, heart, brain and spermatozoa. Acts as a key regulator of adaptive thermogenesis as part of the futile creatine cycle: localizes to the mitochondria of thermogenic fat cells and acts by mediating phosphorylation of creatine to initiate a futile cycle of creatine phosphorylation and dephosphorylation. During the futile creatine cycle, creatine and N-phosphocreatine are in a futile cycle, which dissipates the high energy charge of N-phosphocreatine as heat without performing any mechanical or chemical work. The sequence is that of Creatine kinase B-type (CKB) from Canis lupus familiaris (Dog).